Consider the following 192-residue polypeptide: Ubiquitin-conjugating enzyme E2 T (192 aa).

One can recognise a UBC core domain in the interval 2–152 (QRVSRLKREL…AKKWTEKHAL (151 aa)). C86 serves as the catalytic Glycyl thioester intermediate. The segment at 150-192 (HALPAPQGSDKESQEKSGSSEGTSHKRKSAEIAEESKKPCREP) is disordered. Positions 178–192 (SAEIAEESKKPCREP) are enriched in basic and acidic residues.

It belongs to the ubiquitin-conjugating enzyme family.

The protein localises to the nucleus. It catalyses the reaction S-ubiquitinyl-[E1 ubiquitin-activating enzyme]-L-cysteine + [E2 ubiquitin-conjugating enzyme]-L-cysteine = [E1 ubiquitin-activating enzyme]-L-cysteine + S-ubiquitinyl-[E2 ubiquitin-conjugating enzyme]-L-cysteine.. It participates in protein modification; protein ubiquitination. Accepts ubiquitin from the E1 complex and catalyzes its covalent attachment to other proteins. Catalyzes monoubiquitination. Involved in DNA repair. The chain is Ubiquitin-conjugating enzyme E2 T (ube2t) from Xenopus laevis (African clawed frog).